Consider the following 419-residue polypeptide: UDP-N-acetylglucosamine 1-carboxyvinyltransferase (419 aa).

A phosphoenolpyruvate-binding site is contributed by 22–23 (KN). Arg-91 provides a ligand contact to UDP-N-acetyl-alpha-D-glucosamine. The active-site Proton donor is Cys-115. Cys-115 carries the 2-(S-cysteinyl)pyruvic acid O-phosphothioketal modification. UDP-N-acetyl-alpha-D-glucosamine-binding positions include 120–124 (RPVDL), 160–163 (KVSV), Asp-305, and Val-327.

The protein belongs to the EPSP synthase family. MurA subfamily.

The protein resides in the cytoplasm. The enzyme catalyses phosphoenolpyruvate + UDP-N-acetyl-alpha-D-glucosamine = UDP-N-acetyl-3-O-(1-carboxyvinyl)-alpha-D-glucosamine + phosphate. The protein operates within cell wall biogenesis; peptidoglycan biosynthesis. In terms of biological role, cell wall formation. Adds enolpyruvyl to UDP-N-acetylglucosamine. This is UDP-N-acetylglucosamine 1-carboxyvinyltransferase from Escherichia fergusonii (strain ATCC 35469 / DSM 13698 / CCUG 18766 / IAM 14443 / JCM 21226 / LMG 7866 / NBRC 102419 / NCTC 12128 / CDC 0568-73).